Consider the following 98-residue polypeptide: NADH-ubiquinone oxidoreductase chain 4L (98 aa).

A run of 3 helical transmembrane segments spans residues 1 to 21 (MSLV…GLLM), 29 to 49 (SLLC…IMIL), and 61 to 81 (IILL…LVMV).

This sequence belongs to the complex I subunit 4L family. As to quaternary structure, core subunit of respiratory chain NADH dehydrogenase (Complex I) which is composed of 45 different subunits.

The protein localises to the mitochondrion inner membrane. It carries out the reaction a ubiquinone + NADH + 5 H(+)(in) = a ubiquinol + NAD(+) + 4 H(+)(out). In terms of biological role, core subunit of the mitochondrial membrane respiratory chain NADH dehydrogenase (Complex I) which catalyzes electron transfer from NADH through the respiratory chain, using ubiquinone as an electron acceptor. Part of the enzyme membrane arm which is embedded in the lipid bilayer and involved in proton translocation. The polypeptide is NADH-ubiquinone oxidoreductase chain 4L (MT-ND4L) (Urotrichus talpoides (Japanese shrew mole)).